Reading from the N-terminus, the 318-residue chain is Non-homologous end joining protein Ku (318 aa).

The Ku domain occupies 10–193; that stretch reads AFGLVNVPVK…EVQIKPAELK (184 aa). A disordered region spans residues 259 to 318; that stretch reads SVKARKGGKSDSKDDSDSESDSKESKSDSKPAKKAPAKKAAAKKSTAKKAPAKKAAAKKS. Basic and acidic residues predominate over residues 266 to 289; it reads GKSDSKDDSDSESDSKESKSDSKP. The segment covering 290–318 has biased composition (basic residues); the sequence is AKKAPAKKAAAKKSTAKKAPAKKAAAKKS.

Belongs to the prokaryotic Ku family. As to quaternary structure, homodimer. Interacts with Sir2 and probably also with LigD; may form a trimeric complex during NHEJ.

In terms of biological role, with LigD forms a non-homologous end joining (NHEJ) repair enzyme which repairs blunt-end and 5'-overhang double strand breaks (DSB) with about 50% fidelity, and DSB with non-complementary 3' ends. Plays a partial role in NHEJ on 3'-overhang repair of complementary ends. NHEJ repairs DSB with blunt ends and 5' overhangs with a high level of nucleotide insertion/deletion, without a need for microhomology. This protein but not LigD also suppresses homologous recombination. Overexpression dramatically increases the efficiency of NHEJ with no effect on repair fidelity. This chain is Non-homologous end joining protein Ku, found in Mycolicibacterium smegmatis (strain ATCC 700084 / mc(2)155) (Mycobacterium smegmatis).